The sequence spans 95 residues: ATP-dependent Clp protease adapter protein ClpS (95 aa).

Belongs to the ClpS family. In terms of assembly, binds to the N-terminal domain of the chaperone ClpA.

Involved in the modulation of the specificity of the ClpAP-mediated ATP-dependent protein degradation. In Synechococcus elongatus (strain ATCC 33912 / PCC 7942 / FACHB-805) (Anacystis nidulans R2), this protein is ATP-dependent Clp protease adapter protein ClpS.